Consider the following 335-residue polypeptide: MNKNIPAFHRRCHGLVQGLARTLLLAPVLLALSVPAAQAQTWPSRPIRMVVAAGAGSSVDVFARLVSERLSKALGQAVIVDPRPGANGTIAAQAVASAKPDGYTLLYAGNSALVVAPLMTKDLPYDAEKDLEPVAPVVYVPLAIAVGAKSAIQNIQELVAGAKTDEVFFATPGAASLSRLIGESINQKAGTRLVNIAYPSSPPAHTDIIGGQVPILIDGLGGIAPHAKSGRMRLLAVSTASRFAGFPDVPSISEAVPGLATPSMNIVMAPAGTPAEVLDLLNRHINEITADPAIASRFIPMGGESAQGSRQDTAAMLREQRVEFRKLMQTANIKP.

A signal peptide spans 1 to 39 (MNKNIPAFHRRCHGLVQGLARTLLLAPVLLALSVPAAQA).

Belongs to the UPF0065 (bug) family.

The protein localises to the periplasm. This is UPF0065 protein BB4329 from Bordetella bronchiseptica (strain ATCC BAA-588 / NCTC 13252 / RB50) (Alcaligenes bronchisepticus).